The primary structure comprises 544 residues: Pectinesterase 3 (544 aa).

Residues Asn-174, Asn-257, and Asn-291 are each glycosylated (N-linked (GlcNAc...) asparagine). 2 residues coordinate substrate: Thr-306 and Gln-336. The active-site Proton donor is the Asp-359. Asp-380 serves as the catalytic Nucleophile. Substrate is bound by residues Arg-448 and Trp-450. A glycan (N-linked (GlcNAc...) asparagine) is linked at Asn-532.

In the N-terminal section; belongs to the PMEI family. This sequence in the C-terminal section; belongs to the pectinesterase family.

It is found in the secreted. It localises to the cell wall. The catalysed reaction is [(1-&gt;4)-alpha-D-galacturonosyl methyl ester](n) + n H2O = [(1-&gt;4)-alpha-D-galacturonosyl](n) + n methanol + n H(+). It participates in glycan metabolism; pectin degradation; 2-dehydro-3-deoxy-D-gluconate from pectin: step 1/5. In terms of biological role, acts in the modification of cell walls via demethylesterification of cell wall pectin. The sequence is that of Pectinesterase 3 (PME3) from Solanum lycopersicum (Tomato).